The chain runs to 340 residues: Anthranilate phosphoribosyltransferase (340 aa).

5-phospho-alpha-D-ribose 1-diphosphate-binding positions include Gly78, 81 to 82 (GD), Thr86, 88 to 91 (NIST), 106 to 114 (KHGNRSVSS), and Ser118. Gly78 provides a ligand contact to anthranilate. Ser90 serves as a coordination point for Mg(2+). Asn109 is an anthranilate binding site. Position 164 (Arg164) interacts with anthranilate. Asp223 and Glu224 together coordinate Mg(2+).

This sequence belongs to the anthranilate phosphoribosyltransferase family. In terms of assembly, homodimer. Requires Mg(2+) as cofactor.

The catalysed reaction is N-(5-phospho-beta-D-ribosyl)anthranilate + diphosphate = 5-phospho-alpha-D-ribose 1-diphosphate + anthranilate. The protein operates within amino-acid biosynthesis; L-tryptophan biosynthesis; L-tryptophan from chorismate: step 2/5. Catalyzes the transfer of the phosphoribosyl group of 5-phosphorylribose-1-pyrophosphate (PRPP) to anthranilate to yield N-(5'-phosphoribosyl)-anthranilate (PRA). The protein is Anthranilate phosphoribosyltransferase of Bacillus pumilus (strain SAFR-032).